Here is a 357-residue protein sequence, read N- to C-terminus: Ribosomal RNA large subunit methyltransferase F (357 aa).

Over residues 1–15 the composition is skewed to polar residues; sequence MPKPPRSTQILSCNA. The segment at 1-33 is disordered; the sequence is MPKPPRSTQILSCNAPNGKPKTQHPSARAKVKR.

The protein belongs to the methyltransferase superfamily. METTL16/RlmF family.

It localises to the cytoplasm. The enzyme catalyses adenosine(1618) in 23S rRNA + S-adenosyl-L-methionine = N(6)-methyladenosine(1618) in 23S rRNA + S-adenosyl-L-homocysteine + H(+). Its function is as follows. Specifically methylates the adenine in position 1618 of 23S rRNA. The polypeptide is Ribosomal RNA large subunit methyltransferase F (Shewanella putrefaciens (strain CN-32 / ATCC BAA-453)).